A 388-amino-acid polypeptide reads, in one-letter code: Lysocardiolipin acyltransferase 1 (388 aa).

2 consecutive transmembrane segments (helical) span residues phenylalanine 9 to leucine 29 and isoleucine 46 to valine 66. The short motif at histidine 85–aspartate 90 is the HXXXXD motif element. Transmembrane regions (helical) follow at residues isoleucine 321 to leucine 341 and cysteine 342 to glutamine 362.

This sequence belongs to the 1-acyl-sn-glycerol-3-phosphate acyltransferase family.

The protein resides in the endoplasmic reticulum membrane. The enzyme catalyses a 1-acyl-sn-glycero-3-phosphate + an acyl-CoA = a 1,2-diacyl-sn-glycero-3-phosphate + CoA. It catalyses the reaction a 1-acyl-sn-glycero-3-phospho-(1D-myo-inositol) + an acyl-CoA = a 1,2-diacyl-sn-glycero-3-phospho-(1D-myo-inositol) + CoA. The catalysed reaction is 1-acyl-sn-glycero-3-phospho-(1'-sn-glycerol) + an acyl-CoA = a 1,2-diacyl-sn-glycero-3-phospho-(1'-sn-glycerol) + CoA. It carries out the reaction 1-hexadecanoyl-sn-glycero-3-phosphate + (9Z)-octadecenoyl-CoA = 1-hexadecanoyl-2-(9Z-octadecenoyl)-sn-glycero-3-phosphate + CoA. The enzyme catalyses 1-(9Z-octadecenoyl)-sn-glycero-3-phosphate + (9Z)-octadecenoyl-CoA = 1,2-di-(9Z-octadecenoyl)-sn-glycero-3-phosphate + CoA. It catalyses the reaction 1-(9Z,12Z)-octadecadienoyl-sn-glycero-3-phosphate + (9Z)-octadecenoyl-CoA = 1-(9Z,12Z)-octadecadienoyl-2-(9Z)-octadecenoyl-sn-glycero-3-phosphate + CoA. The catalysed reaction is 1-(9Z,12Z,15Z)-octadecatrienoyl-sn-glycero-3-phosphate + (9Z)-octadecenoyl-CoA = 1-(9Z,12Z,15Z)-octadecatrienoyl-2-(9Z)-octadecenoyl-sn-glycero-3-phosphate + CoA. It carries out the reaction 1-(9Z-octadecenoyl)-sn-glycero-3-phosphate + hexadecanoyl-CoA = 1-(9Z)-octadecenoyl-2-hexadecanoyl-sn-glycero-3-phosphate + CoA. The enzyme catalyses 1-(9Z-octadecenoyl)-sn-glycero-3-phosphate + octadecanoyl-CoA = 1-(9Z-octadecenoyl)-2-octadecanoyl-sn-glycero-3-phosphate + CoA. It catalyses the reaction 1-acyl-sn-glycero-3-phospho-(1'-sn-glycerol) + (9Z)-octadecenoyl-CoA = 1-acyl-2-(9Z-octadecenoyl)-sn-glycero-3-phospho-(1'-sn-glycerol) + CoA. The catalysed reaction is a 1-acyl-sn-glycero-3-phospho-(1D-myo-inositol) + (9Z)-octadecenoyl-CoA = a 1-acyl-2-(9Z-octadecenoyl)-sn-glycero-3-phospho-(1D-myo-inositol) + CoA. It carries out the reaction 1-hexadecanoyl-sn-glycero-3-phospho-(1D-myo-inositol) + hexadecanoyl-CoA = 1,2-dihexadecanoyl-sn-glycero-3-phospho-(1D-myo-inositol) + CoA. The enzyme catalyses 1-hexadecanoyl-sn-glycero-3-phospho-(1D-myo-inositol) + octadecanoyl-CoA = 1-hexadecanoyl-2-octadecanoyl-sn-glycero-3-phospho-(1D-myo-inositol) + CoA. It catalyses the reaction 1-hexadecanoyl-sn-glycero-3-phospho-(1D-myo-inositol) + (9Z)-octadecenoyl-CoA = 1-hexadecanoyl-2-(9Z-octadecenoyl)-sn-glycero-3-phospho-(1D-myo-inositol) + CoA. The catalysed reaction is 1-hexadecanoyl-sn-glycero-3-phospho-(1D-myo-inositol) + (9Z,12Z)-octadecadienoyl-CoA = 1-hexadecanoyl-2-(9Z,12Z-octadecadienoyl)-sn-glycero-3-phospho-(1D-myo-inositol) + CoA. It carries out the reaction 1-hexadecanoyl-sn-glycero-3-phospho-(1D-myo-inositol) + (5Z,8Z,11Z,14Z)-eicosatetraenoyl-CoA = 1-hexadecanoyl-2-(5Z,8Z,11Z,14Z-eicosatetraenoyl)-sn-glycero-3-phospho-D-myo-inositol + CoA. The enzyme catalyses 1-hexadecanoyl-sn-glycero-3-phospho-(1'-sn-glycerol) + hexadecanoyl-CoA = 1,2-dihexadecanoyl-sn-glycero-3-phospho-(1'-sn-glycerol) + CoA. It catalyses the reaction 1-hexadecanoyl-sn-glycero-3-phospho-(1'-sn-glycerol) + octadecanoyl-CoA = 1-hexadecanoyl-2-octadecanoyl-sn-glycero-3-phospho-(1'-sn-glycerol) + CoA. The catalysed reaction is 1-hexadecanoyl-sn-glycero-3-phospho-(1'-sn-glycerol) + (9Z)-octadecenoyl-CoA = 1-hexadecanoyl-2-(9Z-octadecenoyl)-sn-glycero-3-phospho-(1'-sn-glycerol) + CoA. It carries out the reaction 1-hexadecanoyl-sn-glycero-3-phospho-(1'-sn-glycerol) + (9Z,12Z)-octadecadienoyl-CoA = 1-hexadecanoyl-2-(9Z,12Z-octadecadienoyl)-sn-glycero-3-phospho-(1'-sn-glycerol) + CoA. The enzyme catalyses 1-tetradecanoyl-sn-glycero-3-phospho-(1'-sn-glycerol) + (9Z)-octadecenoyl-CoA = 1-tetradecanoyl-2-(9Z-octadecenoyl)-sn-glycero-3-phospho-(1'-sn-glycerol) + CoA. It catalyses the reaction 1-octadecanoyl-sn-glycero-3-phospho-(1'-sn-glycerol) + (9Z)-octadecenoyl-CoA = 1-octadecanoyl-2-(9Z-octadecenoyl)-sn-glycero-3-phospho-(1'-sn-glycerol) + CoA. The catalysed reaction is 1-(9Z-octadecenoyl)-sn-glycero-3-phospho-(1'-sn-glycerol) + (9Z)-octadecenoyl-CoA = 1,2-di-(9Z-octadecenoyl)-sn-glycero-3-phospho-(1'-sn-glycerol) + CoA. It carries out the reaction 1-hexadecanoyl-sn-glycero-3-phospho-(1D-myo-inositol) + dodecanoyl-CoA = 1-hexadecanoyl-2-dodecanoyl-sn-glycero-3-phospho-(1D-myo-inositol) + CoA. The enzyme catalyses 1',3'-bis-[1-acyl-sn-glycero-3-phospho]-glycerol + (9Z)-octadecenoyl-CoA = 1'-[1-acyl-2-(9Z)-octadecenoyl-sn-glycero-3-phospho],3'-[1-acyl,2-hydroxy-sn-glycero-3-phospho]-glycerol + CoA. It catalyses the reaction 1'-[1,2-diacyl-sn-glycero-3-phospho],3'-[1-acyl-sn-glycero-3-phospho]-glycerol + (9Z)-octadecenoyl-CoA = 1'-[1,2-diacyl-sn-glycero-3-phospho],3'-[1-acyl,2-(9Z)-octadecenoyl-sn-glycero-3-phospho]-glycerol + CoA. The catalysed reaction is 1'-[1,2-diacyl-sn-glycero-3-phospho],3'-[1-acyl-sn-glycero-3-phospho]-glycerol + (9Z,12Z)-octadecadienoyl-CoA = 1'-[1,2-diacyl-sn-glycero-3-phospho],3'-[1-acyl,2-(9Z,12Z)-octadecadienoyl-sn-glycero-3-phospho]-glycerol + CoA. It carries out the reaction 1'-[1,2-diacyl-sn-glycero-3-phospho],3'-[1-acyl-sn-glycero-3-phospho]-glycerol + dodecanoyl-CoA = 1'-[1,2-diacyl-sn-glycero-3-phospho],3'-[1-acyl,2-dodecanoyl-sn-glycero-3-phospho]-glycerol + CoA. The enzyme catalyses 1',3'-bis-[1-acyl-sn-glycero-3-phospho]-glycerol + dodecanoyl-CoA = 1'-[1-acyl-2-dodecanoyl-sn-glycero-3-phospho],3'-[1-acyl,2-hydroxy-sn-glycero-3-phospho]-glycerol + CoA. It catalyses the reaction a 1-acyl-sn-glycero-3-phosphate + (9Z)-octadecenoyl-CoA = a 1-acyl-2-(9Z-octadecenoyl)-sn-glycero-3-phosphate + CoA. The catalysed reaction is 1',3'-bis-[1-acyl-sn-glycero-3-phospho]-glycerol + (9Z,12Z)-octadecadienoyl-CoA = 1'-[1-acyl-2-(9Z,12Z)-octadecadienoyl-sn-glycero-3-phospho],3'-[1-acyl,2-hydroxy-sn-glycero-3-phospho]-glycerol + CoA. It carries out the reaction 1',3'-bis-[1-acyl-sn-glycero-3-phospho]-glycerol + hexadecanoyl-CoA = 1'-[1-acyl-2-hexadecanoyl-sn-glycero-3-phospho],3'-[1-acyl,2-hydroxy-sn-glycero-3-phospho]-glycerol + CoA. The enzyme catalyses 1',3'-bis-[1-acyl-sn-glycero-3-phospho]-glycerol + octadecanoyl-CoA = 1'-[1-acyl-2-octadecanoyl-sn-glycero-3-phospho],3'-[1-acyl,2-hydroxy-sn-glycero-3-phospho]-glycerol + CoA. It catalyses the reaction 1'-[1,2-diacyl-sn-glycero-3-phospho],3'-[1-acyl-sn-glycero-3-phospho]-glycerol + octanoyl-CoA = 1'-[1,2-diacyl-sn-glycero-3-phospho],3'-[1-acyl,2-octanoyl-sn-glycero-3-phospho]-glycerol + CoA. The catalysed reaction is 1',3'-bis-[1-acyl-sn-glycero-3-phospho]-glycerol + octanoyl-CoA = 1'-[1-acyl-2-octanoyl-sn-glycero-3-phospho],3'-[1-acyl,2-hydroxy-sn-glycero-3-phospho]-glycerol + CoA. It carries out the reaction 1'-[1,2-diacyl-sn-glycero-3-phospho],3'-[1-acyl-sn-glycero-3-phospho]-glycerol + hexadecanoyl-CoA = 1'-[1,2-diacyl-sn-glycero-3-phospho],3'-[1-acyl,2-hexadecanoyl-sn-glycero-3-phospho]-glycerol + CoA. The enzyme catalyses 1'-[1,2-diacyl-sn-glycero-3-phospho],3'-[1-acyl-sn-glycero-3-phospho]-glycerol + (5Z,8Z,11Z,14Z)-eicosatetraenoyl-CoA = 1'-[1,2-diacyl-sn-glycero-3-phospho],3'-[1-acyl,2-(5Z,8Z,11Z,14Z)-eicosatetraenoyl-sn-glycero-3-phospho]-glycerol + CoA. It catalyses the reaction 1',3'-bis-[1-acyl-sn-glycero-3-phospho]-glycerol + (5Z,8Z,11Z,14Z)-eicosatetraenoyl-CoA = 1'-[1-acyl-2-(5Z,8Z,11Z,14Z)-eicosatetraenoyl-sn-glycero-3-phospho],3'-[1-acyl,2-hydroxy-sn-glycero-3-phospho]-glycerol + CoA. The catalysed reaction is a 1-acyl-sn-glycero-3-phospho-(1D-myo-inositol) + octadecanoyl-CoA = a 1-acyl-2-octadecanoyl-sn-glycero-3-phospho-(1D-myo-inositol) + CoA. It carries out the reaction a 2-acyl-sn-glycero-3-phospho-D-myo-inositol + octadecanoyl-CoA = 1-octadecanoyl-2-acyl-sn-glycero-3-phospho-1D-myo-inositol + CoA. Its pathway is phospholipid metabolism; CDP-diacylglycerol biosynthesis; CDP-diacylglycerol from sn-glycerol 3-phosphate: step 2/3. Its function is as follows. Exhibits acyl-CoA:lysocardiolipin acyltransferase (ALCAT) activity; catalyzes the reacylation of lyso-cardiolipin to cardiolipin (CL), a key step in CL remodeling. Recognizes both monolysocardiolipin and dilysocardiolipin as substrates with a preference for linoleoyl-CoA and oleoyl-CoA as acyl donors. Also exhibits 1-acyl-sn-glycerol-3-phosphate acyltransferase activity (AGPAT) activity; converts 1-acyl-sn-glycerol-3- phosphate (lysophosphatidic acid or LPA) into 1,2-diacyl-sn-glycerol-3- phosphate (phosphatidic acid or PA) by incorporating an acyl moiety at the sn-2 position of the glycerol backbone. Possesses both lysophosphatidylinositol acyltransferase (LPIAT) and lysophosphatidylglycerol acyltransferase (LPGAT) activities. Required for establishment of the hematopoietic and endothelial lineages. In Danio rerio (Zebrafish), this protein is Lysocardiolipin acyltransferase 1 (lclat1).